We begin with the raw amino-acid sequence, 104 residues long: MFSTSDQVSKMNSRILSALLILGIATCVIAGGFCPKSRHPQCNLSYKINDCCAQSDCRVGSVCCVEGCGNVCRAESDTPLGEKFVDGSECKHGHVFPKKWYQFR.

An N-terminal signal peptide occupies residues 1-30 (MFSTSDQVSKMNSRILSALLILGIATCVIA). Residues 31–76 (GGFCPKSRHPQCNLSYKINDCCAQSDCRVGSVCCVEGCGNVCRAES) enclose the WAP domain. 5 disulfides stabilise this stretch: Cys34/Cys64, Cys42/Cys68, Cys51/Cys63, Cys52/Cys90, and Cys57/Cys72.

The protein belongs to the venom protein 11 family. 02 (wap-2) subfamily. In terms of processing, contains 5 disulfide bonds. In terms of tissue distribution, expressed by the venom gland.

It is found in the secreted. Has antibacterial activity. This Lycosa singoriensis (Wolf spider) protein is U20-lycotoxin-Ls1d.